The following is a 105-amino-acid chain: MVNVPKARRTFCDGKCRKHTNHKVTQYKKGKESKFAQGRRRYDRKQSGFGGQTKPIFRKKAKTTKKIVLRMECTECKHKKQLPIKRCKHFELGGQKKSRGQVIQF.

Positions Lys23 to Ala61 are disordered.

It belongs to the eukaryotic ribosomal protein eL42 family.

The polypeptide is Large ribosomal subunit protein eL42 (Caenorhabditis elegans).